Here is a 513-residue protein sequence, read N- to C-terminus: MAFSQYISLAPELLLATAIFCLVFWVLRGTRTQVPKGLKSPPGPWGLPFIGHMLTLGKNPHLSLTKLSQQYGDVLQIRIGSTPVVVLSGLNTIKQALVKQGDDFKGRPDLYSFTLITNGKSMTFNPDSGPVWAARRRLAQDALKSFSIASDPTSVSSCYLEEHVSKEANHLISKFQKLMAEVGHFEPVNQVVESVANVIGAMCFGKNFPRKSEEMLNLVKSSKDFVENVTSGNAVDFFPVLRYLPNPALKRFKNFNDNFVLFLQKTVQEHYQDFNKNSIQDITGALFKHSENYKDNGGLIPQEKIVNIVNDIFGAGFETVTTAIFWSILLLVTEPKVQRKIHEELDTVIGRDRQPRLSDRPQLPYLEAFILEIYRYTSFVPFTIPHSTTRDTSLNGFHIPKECCIFINQWQVNHDEKQWKDPFVFRPERFLTNDNTAIDKTLSEKVMLFGLGKRRCIGEIPAKWEVFLFLAILLHQLEFTVPPGVKVDLTPSYGLTMKPRTCEHVQAWPRFSK.

A glycan (O-linked (GlcNAc) serine) is linked at Ser-68. Position 456 (Cys-456) interacts with heme.

This sequence belongs to the cytochrome P450 family. As to quaternary structure, interacts with PGRMC1; the interaction requires PGRMC1 homodimerization. It depends on heme as a cofactor.

The protein resides in the endoplasmic reticulum membrane. The protein localises to the microsome membrane. The catalysed reaction is an organic molecule + reduced [NADPH--hemoprotein reductase] + O2 = an alcohol + oxidized [NADPH--hemoprotein reductase] + H2O + H(+). It catalyses the reaction 17beta-estradiol + reduced [NADPH--hemoprotein reductase] + O2 = 2-hydroxy-17beta-estradiol + oxidized [NADPH--hemoprotein reductase] + H2O + H(+). The enzyme catalyses 17beta-estradiol + reduced [NADPH--hemoprotein reductase] + O2 = 4-hydroxy-17beta-estradiol + oxidized [NADPH--hemoprotein reductase] + H2O + H(+). It carries out the reaction estrone + reduced [NADPH--hemoprotein reductase] + O2 = 2-hydroxyestrone + oxidized [NADPH--hemoprotein reductase] + H2O + H(+). The catalysed reaction is estrone + reduced [NADPH--hemoprotein reductase] + O2 = 4-hydroxyestrone + oxidized [NADPH--hemoprotein reductase] + H2O + H(+). It catalyses the reaction cholesterol + reduced [NADPH--hemoprotein reductase] + O2 = 25-hydroxycholesterol + oxidized [NADPH--hemoprotein reductase] + H2O + H(+). The enzyme catalyses all-trans-retinol + reduced [NADPH--hemoprotein reductase] + O2 = all-trans-retinal + oxidized [NADPH--hemoprotein reductase] + 2 H2O + H(+). It carries out the reaction all-trans-retinal + reduced [NADPH--hemoprotein reductase] + O2 = all-trans-retinoate + oxidized [NADPH--hemoprotein reductase] + H2O + 2 H(+). The catalysed reaction is (5Z,8Z,11Z,14Z)-eicosatetraenoate + reduced [NADPH--hemoprotein reductase] + O2 = (14R,15S)-epoxy-(5Z,8Z,11Z)-eicosatrienoate + oxidized [NADPH--hemoprotein reductase] + H2O + H(+). It catalyses the reaction (5Z,8Z,11Z,14Z)-eicosatetraenoate + reduced [NADPH--hemoprotein reductase] + O2 = (14S,15R)-epoxy-(5Z,8Z,11Z)-eicosatrienoate + oxidized [NADPH--hemoprotein reductase] + H2O + H(+). The enzyme catalyses (5Z,8Z,11Z,14Z,17Z)-eicosapentaenoate + reduced [NADPH--hemoprotein reductase] + O2 = (17R,18S)-epoxy-(5Z,8Z,11Z,14Z)-eicosatetraenoate + oxidized [NADPH--hemoprotein reductase] + H2O + H(+). It carries out the reaction (4Z,7Z,10Z,13Z,16Z,19Z)-docosahexaenoate + reduced [NADPH--hemoprotein reductase] + O2 = (19R,20S)-epoxy-(4Z,7Z,10Z,13Z,16Z)-docosapentaenoate + oxidized [NADPH--hemoprotein reductase] + H2O + H(+). The catalysed reaction is (5S)-hydroperoxy-(6E,8Z,11Z,14Z)-eicosatetraenoate = 5-oxo-(6E,8Z,11Z,14Z)-eicosatetraenoate + H2O. It catalyses the reaction (12S)-hydroperoxy-(5Z,8Z,10E,14Z)-eicosatetraenoate = 12-oxo-(5Z,8Z,10E,14Z)-eicosatetraenoate + H2O. The enzyme catalyses (15S)-hydroperoxy-(5Z,8Z,11Z,13E)-eicosatetraenoate = 15-oxo-(5Z,8Z,11Z,13E)-eicosatetraenoate + H2O. It carries out the reaction (13S)-hydroperoxy-(9Z,11E)-octadecadienoate = 13-oxo-(9Z,11E)-octadecadienoate + H2O. The catalysed reaction is (5Z,8Z,11Z,14Z)-eicosatetraenoate + reduced [NADPH--hemoprotein reductase] + O2 = 13-hydroxy-(5Z,8Z,11Z,14Z)-eicosatetraenoate + oxidized [NADPH--hemoprotein reductase] + H2O + H(+). It catalyses the reaction (5Z,8Z,11Z,14Z)-eicosatetraenoate + reduced [NADPH--hemoprotein reductase] + O2 = 19-hydroxy-(5Z,8Z,11Z,14Z)-eicosatetraenoate + oxidized [NADPH--hemoprotein reductase] + H2O + H(+). The enzyme catalyses (9Z,12Z)-octadecadienoate + reduced [NADPH--hemoprotein reductase] + O2 = 11-hydroxy-(9Z,12Z)-octadecadienoate + oxidized [NADPH--hemoprotein reductase] + H2O + H(+). It participates in cofactor metabolism; retinol metabolism. It functions in the pathway steroid metabolism; cholesterol metabolism. Its pathway is lipid metabolism; arachidonate metabolism. In terms of biological role, a cytochrome P450 monooxygenase involved in the metabolism of various endogenous substrates, including fatty acids, steroid hormones and vitamins. Mechanistically, uses molecular oxygen inserting one oxygen atom into a substrate, and reducing the second into a water molecule, with two electrons provided by NADPH via cytochrome P450 reductase (NADPH--hemoprotein reductase). Catalyzes the hydroxylation of carbon-hydrogen bonds. Exhibits high catalytic activity for the formation of hydroxyestrogens from estrone (E1) and 17beta-estradiol (E2), namely 2-hydroxy E1 and E2. Metabolizes cholesterol toward 25-hydroxycholesterol, a physiological regulator of cellular cholesterol homeostasis. May act as a major enzyme for all-trans retinoic acid biosynthesis in the liver. Catalyzes two successive oxidative transformation of all-trans retinol to all-trans retinal and then to the active form all-trans retinoic acid. Primarily catalyzes stereoselective epoxidation of the last double bond of polyunsaturated fatty acids (PUFA), displaying a strong preference for the (R,S) stereoisomer. Catalyzes bisallylic hydroxylation and omega-1 hydroxylation of PUFA. May also participate in eicosanoids metabolism by converting hydroperoxide species into oxo metabolites (lipoxygenase-like reaction, NADPH-independent). Plays a role in the oxidative metabolism of xenobiotics. Catalyzes the N-hydroxylation of heterocyclic amines and the O-deethylation of phenacetin. Metabolizes caffeine via N3-demethylation. The polypeptide is Cytochrome P450 1A2 (Cyp1a2) (Rattus norvegicus (Rat)).